Consider the following 313-residue polypeptide: MSFTDQVKHEVSRLESNNKMCQLAELSALIMMNGSIQIINKNLAVKVRLYHGDLARKVYKLIKERFELNIEIMVRRRNHFSTYQNIYDLFLPPQPGIEVFLKKVGVLDEDHNLLFRIKKELVTSKSCQKSYVRGAFLGGGSVNNPRGEYHLEFRCEHESFAEDLLMLLKRFGLEGHLTEHRKKYVVYFKSFSEVATILNIIGAHKALLKLEDNKVLKEVKNGVNRRVNCETANLDKTVKAAMLQLEDIELIEKTRGLETLSNSLQEIAIIRKKYPYASLKELGKLLDPPLSKSGVNHRLRRIKSIANEIRGER.

The H-T-H motif DNA-binding region spans 278 to 311 (SLKELGKLLDPPLSKSGVNHRLRRIKSIANEIRG).

The protein belongs to the WhiA family.

In terms of biological role, involved in cell division and chromosome segregation. This chain is Probable cell division protein WhiA, found in Halothermothrix orenii (strain H 168 / OCM 544 / DSM 9562).